We begin with the raw amino-acid sequence, 504 residues long: MEEFQGYLELDRYQQHDFLYPLIFREYIYALAHDHGLNRSILLDNVGYDTKYSLLIIKRLISRMYQQNHLIISANDSNQNKFFGYNKNLYSQMMSEGFAVIVEIPFSLRLVSSLEATEIVKSYNLRSIHSIFPFLEDKFPHLNYVSDVLIPYPIHLEILVQTLRYWVKDPSSLHLLRLLLHEYYNWNSLITTKKVIFSKSNPRLFLLLYNSHVCEYESILLFLRNQSSHLRLTSSGIFFERIHFYEKKKYPVEEVFVNDFPAAILWFFKDPFMHYVRYQGKSILSSKDTPLLMNKWKYYLVNLWQCHSYVWSQPGRIYINQLSKHSLDFLGYFSSMRPNLSVVRSQMLENSFLMDNAMKKLDTLVPIIPLIGSLAKVKFCNALGHPISKSTWADSSDFDIIDRFVHICRNLSHYYSGSSRKKSLYRIKYILRLSCVKTLARKHKSTVRTFLKRLGYKLLDEFFTEEEQILSLIFPRASYTLKKFYRGRIWYLDIFCINDLVNHE.

Belongs to the intron maturase 2 family. MatK subfamily.

It is found in the plastid. It localises to the chloroplast. Usually encoded in the trnK tRNA gene intron. Probably assists in splicing its own and other chloroplast group II introns. The sequence is that of Maturase K from Vauquelinia californica (Arizona rosewood).